The following is a 644-amino-acid chain: Large subunit GTPase 1 homolog (644 aa).

Residues 1–31 (MGRRRAPGGGSLGRVLIRQQTQRSRSHRHTD) are disordered. A phosphoserine mark is found at Ser93 and Ser97. Positions 164–430 (WRQLWRVIER…LCDCPGLVMP (267 aa)) constitute a CP-type G domain. GTP is bound at residue 212 to 215 (NKAD). The interval 253–345 (KEEVDSVAGD…KNAENQQVNN (93 aa)) is disordered. Positions 302 to 326 (CQEDEEEDWQTCSEEDSVPEEEEGC) are enriched in acidic residues. GTP is bound by residues 379-386 (GYPNVGKS) and 423-426 (DCPG). Residues 618–644 (VPGKPWKKHGNRNKKEKSRRLYKHLDV) are disordered. Residues 622-644 (PWKKHGNRNKKEKSRRLYKHLDV) are compositionally biased toward basic residues.

The protein belongs to the TRAFAC class YlqF/YawG GTPase family. LSG1 subfamily.

Its subcellular location is the cytoplasm. The protein localises to the endoplasmic reticulum. It localises to the nucleus. It is found in the cajal body. It carries out the reaction GTP + H2O = GDP + phosphate + H(+). Its function is as follows. Functions as a GTPase. May act by mediating the release of NMD3 from the 60S ribosomal subunit after export into the cytoplasm during the 60S ribosomal subunit maturation. This is Large subunit GTPase 1 homolog from Mus musculus (Mouse).